The sequence spans 123 residues: Small ribosomal subunit protein uS12 (123 aa).

At Asp89 the chain carries 3-methylthioaspartic acid.

It belongs to the universal ribosomal protein uS12 family. As to quaternary structure, part of the 30S ribosomal subunit. Contacts proteins S8 and S17. May interact with IF1 in the 30S initiation complex.

In terms of biological role, with S4 and S5 plays an important role in translational accuracy. Its function is as follows. Interacts with and stabilizes bases of the 16S rRNA that are involved in tRNA selection in the A site and with the mRNA backbone. Located at the interface of the 30S and 50S subunits, it traverses the body of the 30S subunit contacting proteins on the other side and probably holding the rRNA structure together. The combined cluster of proteins S8, S12 and S17 appears to hold together the shoulder and platform of the 30S subunit. The protein is Small ribosomal subunit protein uS12 of Mesorhizobium japonicum (strain LMG 29417 / CECT 9101 / MAFF 303099) (Mesorhizobium loti (strain MAFF 303099)).